The primary structure comprises 106 residues: Iron-sulfur cluster assembly protein CyaY (106 aa).

This sequence belongs to the frataxin family.

In terms of biological role, involved in iron-sulfur (Fe-S) cluster assembly. May act as a regulator of Fe-S biogenesis. The chain is Iron-sulfur cluster assembly protein CyaY from Escherichia coli O7:K1 (strain IAI39 / ExPEC).